The sequence spans 309 residues: Mannitol-1-phosphatase (309 aa).

Histidine 82 acts as the Tele-phosphohistidine intermediate in catalysis. The active-site Proton donor/acceptor is the glutamate 166.

This sequence belongs to the phosphoglycerate mutase family.

It catalyses the reaction D-mannitol 1-phosphate + H2O = D-mannitol + phosphate. By diethyl pyrocarbonate (DEPC). Its function is as follows. Key enzyme for mannitol biosynthesis. The chain is Mannitol-1-phosphatase from Eimeria tenella (Coccidian parasite).